A 233-amino-acid chain; its full sequence is uncharacterized protein (233 aa).

Residues 190 to 233 (LNTSLSEDDTESIVETDYSEEEKESISETESSSDDESYSLYDSF) form a disordered region. A compositionally biased stretch (acidic residues) spans 195 to 212 (SEDDTESIVETDYSEEEK).

The protein belongs to the asfivirus DP238L family.

This is an uncharacterized protein from Ornithodoros (relapsing fever ticks).